Reading from the N-terminus, the 293-residue chain is tRNA pseudouridine synthase B (293 aa).

Catalysis depends on Asp39, which acts as the Nucleophile.

The protein belongs to the pseudouridine synthase TruB family. Type 1 subfamily.

It catalyses the reaction uridine(55) in tRNA = pseudouridine(55) in tRNA. In terms of biological role, responsible for synthesis of pseudouridine from uracil-55 in the psi GC loop of transfer RNAs. This chain is tRNA pseudouridine synthase B, found in Rickettsia bellii (strain OSU 85-389).